The sequence spans 179 residues: Signal peptidase complex subunit 2 (179 aa).

Topologically, residues 1–48 (MSGNNVQEEDSTFHVSNLYSETEIKKITQDFISEKIREQNFEEIVKYS) are cytoplasmic. Residues 49 to 69 (NIRIFLSLVLIVIGTYCSIFV) form a helical membrane-spanning segment. Residues 70-74 (QYKKN) are Extracellular-facing. Residues 75–95 (PVIMIQLLVAFFVVSTTLIIF) traverse the membrane as a helical segment. The Cytoplasmic segment spans residues 96 to 179 (EYFFFDDVFM…AHGRTLKLKN (84 aa)).

This sequence belongs to the SPCS2 family. Component of the signal peptidase complex (SPC) composed of a catalytic subunit SEC11/SPC21 and three accessory subunits SPC25, SPC3/SPC22, SPC1/SPC12. The complex induces a local thinning of the ER membrane which is used to measure the length of the signal peptide (SP) h-region of protein substrates. This ensures the selectivity of the complex towards h-regions shorter than 18-20 amino acids. Within the complex, interacts with SEC11/SPC21. Component of a complex composed of SPC25 and PMV; the interaction is mediated via the transmembrane domains. The complex interacts with the SEC61 channel-forming translocon complex and is involved in the recognition and import of PEXEL motif-containing proteins into the ER for subsequent export.

Its subcellular location is the endoplasmic reticulum membrane. In terms of biological role, component of the signal peptidase complex (SPC) which catalyzes the cleavage of N-terminal signal sequences from nascent proteins as they are translocated into the lumen of the endoplasmic reticulum. Enhances the enzymatic activity of SPC and facilitates the interactions between different components of the translocation site. Also, regulatory component of the CSP25-plasmepsin PMV complex which cleaves the pentameric localization motif RxLxE/Q/D (termed Plasmodium export element (PEXEL)) located downstream of the N-terminal secretory signal sequence of several proteins. This is Signal peptidase complex subunit 2 from Plasmodium falciparum (isolate 3D7).